The following is a 197-amino-acid chain: Ribonuclease HII (197 aa).

One can recognise an RNase H type-2 domain in the interval 3-192 (QLIAGVDEVG…VQLSLMQRGG (190 aa)). The a divalent metal cation site is built by aspartate 9, glutamate 10, and aspartate 101.

The protein belongs to the RNase HII family. Requires Mn(2+) as cofactor. Mg(2+) serves as cofactor.

The protein localises to the cytoplasm. The enzyme catalyses Endonucleolytic cleavage to 5'-phosphomonoester.. Functionally, endonuclease that specifically degrades the RNA of RNA-DNA hybrids. The sequence is that of Ribonuclease HII from Pseudoalteromonas atlantica (strain T6c / ATCC BAA-1087).